The primary structure comprises 99 residues: Small ribosomal subunit protein uS14 (99 aa).

This sequence belongs to the universal ribosomal protein uS14 family. As to quaternary structure, part of the 30S ribosomal subunit. Contacts proteins S3 and S10.

Binds 16S rRNA, required for the assembly of 30S particles and may also be responsible for determining the conformation of the 16S rRNA at the A site. This chain is Small ribosomal subunit protein uS14, found in Bacteroides fragilis (strain ATCC 25285 / DSM 2151 / CCUG 4856 / JCM 11019 / LMG 10263 / NCTC 9343 / Onslow / VPI 2553 / EN-2).